The following is a 467-amino-acid chain: Gamma-aminobutyric acid receptor subunit rho-3 (467 aa).

The first 24 residues, 1–24, serve as a signal peptide directing secretion; the sequence is MVLAFQLVSFTYIWIILKPNVCAA. Residues 25 to 266 are Extracellular-facing; that stretch reads SNIKMTHQRC…LFINFVLRRH (242 aa). Residues Arg-111 and Ser-175 each contribute to the 4-aminobutanoate site. Cys-184 and Cys-198 are joined by a disulfide. Glu-203 contributes to the 4-aminobutanoate binding site. A glycan (N-linked (GlcNAc...) asparagine) is linked at Asn-220. The chain crosses the membrane as a helical span at residues 267–287; it reads VFFFVLQTYFPAILMVMLSWV. The Cytoplasmic segment spans residues 288–299; sequence SFWIDRRAVPAR. A helical transmembrane segment spans residues 300-320; that stretch reads VSLGITTVLTMSTIITAVSAS. Over 321–331 the chain is Extracellular; that stretch reads MPQVSYLKAVD. A helical transmembrane segment spans residues 332–352; sequence VYLWVSSLFVFLSVIEYAAVN. Residues 347 to 448 are interaction with SQSTM1; it reads EYAAVNYLTT…NNHVIDTYSR (102 aa). The Cytoplasmic portion of the chain corresponds to 353–446; the sequence is YLTTVEERKQ…LENNHVIDTY (94 aa). Residues 447–467 form a helical membrane-spanning segment; that stretch reads SRILFPIVYILFNLFYWGVYV.

It belongs to the ligand-gated ion channel (TC 1.A.9) family. Gamma-aminobutyric acid receptor (TC 1.A.9.5) subfamily. GABRR3 sub-subfamily. Three rho subunits (rho-1/GBRR1, rho-2/GBRR2 and rho-3/GBRR3) coassemble either to form functional homopentamers or heteropentamers. Forms a ternary complex with SQSTM1 and PRKCZ.

The protein resides in the postsynaptic cell membrane. It localises to the cell membrane. It carries out the reaction chloride(in) = chloride(out). With respect to regulation, inhibited by TPMPA, a rho-specific antagonist, when forming a homopentamer. Functionally, rho subunit of the pentameric ligand-gated chloride channels responsible for mediating the effects of gamma-aminobutyric acid (GABA), the major inhibitory neurotransmitter in the brain. Rho-containing GABA-gated chloride channels are a subclass of GABA(A) receptors (GABAARs) entirely composed of rho subunits, where GABA molecules bind at the rho intersubunit interfaces. When activated by GABA, rho-GABAARs selectively allow the flow of chloride anions across the cell membrane down their electrochemical gradient. This is Gamma-aminobutyric acid receptor subunit rho-3 from Homo sapiens (Human).